Consider the following 153-residue polypeptide: Proline-rich membrane anchor 1 (153 aa).

The signal sequence occupies residues 1–35 (MLLRDLVLRHGCCWPSLLLHCALHPLWGLVQVTHA). Residues 36-92 (EPQKSCSKVTDSCQHICQCRPPPPLPPPPPPPPPPRLLSAPAPNSTSCPAEDSWWSG) are Extracellular-facing. The region spanning 56 to 70 (PPPPLPPPPPPPPPP) is the PRAD domain. The segment covering 59–71 (PLPPPPPPPPPPR) has biased composition (pro residues). The interval 59 to 79 (PLPPPPPPPPPPRLLSAPAPN) is disordered. Asparagine 79 is a glycosylation site (N-linked (GlcNAc...) asparagine). A helical membrane pass occupies residues 93–113 (LVIIVAVVCASLVFLTVLVII). The Cytoplasmic portion of the chain corresponds to 114–153 (CYKAIKRKPLRKDENGASVAEYPMSSSPSNKGVDVNAAVV). Residues 133 to 153 (AEYPMSSSPSNKGVDVNAAVV) form a disordered region.

As to quaternary structure, interacts with ACHE, probably through disulfide bonds. Isoforms 1 and 2 are expressed in the adult brain. In matured cortical neurons, only isoform 1 is detectable.

It localises to the cell membrane. It is found in the cell junction. The protein localises to the synapse. Required to anchor acetylcholinesterase (ACHE) to the basal lamina of the neuromuscular junction and to the membrane of neuronal synapses in brain. Organizes ACHE into tetramers. The polypeptide is Proline-rich membrane anchor 1 (Prima1) (Rattus norvegicus (Rat)).